The chain runs to 69 residues: DNA gyrase inhibitor YacG (69 aa).

Positions 13, 16, 32, and 36 each coordinate Zn(2+).

This sequence belongs to the DNA gyrase inhibitor YacG family. As to quaternary structure, interacts with GyrB. Requires Zn(2+) as cofactor.

In terms of biological role, inhibits all the catalytic activities of DNA gyrase by preventing its interaction with DNA. Acts by binding directly to the C-terminal domain of GyrB, which probably disrupts DNA binding by the gyrase. The chain is DNA gyrase inhibitor YacG from Neisseria meningitidis serogroup B (strain ATCC BAA-335 / MC58).